The chain runs to 607 residues: Polypeptide N-acetylgalactosaminyltransferase 18 (607 aa).

Topologically, residues Met1–Ser12 are cytoplasmic. A helical; Signal-anchor for type II membrane protein membrane pass occupies residues Thr13–Tyr35. The Lumenal segment spans residues Ile36 to Ser607. 5 disulfides stabilise this stretch: Cys144/Cys377, Cys368/Cys447, Cys482/Cys498, Cys530/Cys543, and Cys571/Cys591. An N-linked (GlcNAc...) asparagine glycan is attached at Asn146. Residues Leu153–Arg267 are catalytic subdomain A. Asp194 contacts substrate. An N-linked (GlcNAc...) asparagine glycan is attached at Asn195. Asp251 and His253 together coordinate Mn(2+). An N-linked (GlcNAc...) asparagine glycan is attached at Asn320. Residues Pro324–Arg385 form a catalytic subdomain B region. Residue His382 coordinates Mn(2+). The substrate site is built by Arg385 and Tyr390. The 131-residue stretch at Ala469 to Thr599 folds into the Ricin B-type lectin domain.

It belongs to the glycosyltransferase 2 family. GalNAc-T subfamily. Mn(2+) serves as cofactor.

It localises to the golgi apparatus membrane. The catalysed reaction is L-seryl-[protein] + UDP-N-acetyl-alpha-D-galactosamine = a 3-O-[N-acetyl-alpha-D-galactosaminyl]-L-seryl-[protein] + UDP + H(+). It catalyses the reaction L-threonyl-[protein] + UDP-N-acetyl-alpha-D-galactosamine = a 3-O-[N-acetyl-alpha-D-galactosaminyl]-L-threonyl-[protein] + UDP + H(+). Its pathway is protein modification; protein glycosylation. Its function is as follows. Catalyzes the initial reaction in O-linked oligosaccharide biosynthesis, the transfer of an N-acetyl-D-galactosamine (GalNAc) residue from UDP-GalNAc to a serine or threonine residue on the protein receptor. The polypeptide is Polypeptide N-acetylgalactosaminyltransferase 18 (GALNT18) (Homo sapiens (Human)).